A 254-amino-acid polypeptide reads, in one-letter code: 3-beta-hydroxysteroid dehydrogenase (254 aa).

NAD(+) contacts are provided by residues 12–40 and aspartate 61; that span reads VTGGASGVGLEVVKLLLGEGAKVAFSDIN. Serine 139 serves as a coordination point for substrate. Tyrosine 152 acts as the Proton acceptor in catalysis. Lysine 156 provides a ligand contact to NAD(+).

This sequence belongs to the short-chain dehydrogenases/reductases (SDR) family. In terms of assembly, homotetramer.

The catalysed reaction is testosterone + NAD(+) = androst-4-ene-3,17-dione + NADH + H(+). It catalyses the reaction testosterone + NADP(+) = androst-4-ene-3,17-dione + NADPH + H(+). The protein is 3-beta-hydroxysteroid dehydrogenase of Comamonas testosteroni (Pseudomonas testosteroni).